Consider the following 205-residue polypeptide: Guanylate kinase (205 aa).

Positions 6-185 (GLLIVLSRPS…ACDRIKAIVV (180 aa)) constitute a Guanylate kinase-like domain. Residue 13-20 (RPSGVGKG) coordinates ATP.

This sequence belongs to the guanylate kinase family.

It localises to the cytoplasm. The catalysed reaction is GMP + ATP = GDP + ADP. Functionally, essential for recycling GMP and indirectly, cGMP. The sequence is that of Guanylate kinase from Bacillus cereus (strain ATCC 14579 / DSM 31 / CCUG 7414 / JCM 2152 / NBRC 15305 / NCIMB 9373 / NCTC 2599 / NRRL B-3711).